A 239-amino-acid chain; its full sequence is ATP-dependent dethiobiotin synthetase BioD (239 aa).

Residue 15–20 coordinates ATP; sequence EIGKTF. Mg(2+) is bound at residue Thr-19. Lys-40 is a catalytic residue. ATP-binding positions include Asp-57, 118–121, 178–179, and 211–213; these read EGVG, NH, and AHL. Mg(2+)-binding residues include Asp-57 and Glu-118.

The protein belongs to the dethiobiotin synthetase family. In terms of assembly, homodimer. Requires Mg(2+) as cofactor.

It localises to the cytoplasm. The catalysed reaction is (7R,8S)-7,8-diammoniononanoate + CO2 + ATP = (4R,5S)-dethiobiotin + ADP + phosphate + 3 H(+). It participates in cofactor biosynthesis; biotin biosynthesis; biotin from 7,8-diaminononanoate: step 1/2. In terms of biological role, catalyzes a mechanistically unusual reaction, the ATP-dependent insertion of CO2 between the N7 and N8 nitrogen atoms of 7,8-diaminopelargonic acid (DAPA, also called 7,8-diammoniononanoate) to form a ureido ring. In Burkholderia vietnamiensis (strain G4 / LMG 22486) (Burkholderia cepacia (strain R1808)), this protein is ATP-dependent dethiobiotin synthetase BioD.